We begin with the raw amino-acid sequence, 119 residues long: Host cell factor C1 regulator 1 (119 aa).

Residues 1–34 (MILQQPLERGPQGRAQRDPRAASGASGGLDAREP) are disordered. Residues 57–60 (DHPY) are interaction with HCFC1. The Nuclear export signal signature appears at 91–100 (IPEALRLLRL).

In terms of assembly, interacts with HCFC1.

It localises to the cytoplasm. Its subcellular location is the nucleus. In terms of biological role, regulates HCFC1 activity by modulating its subcellular localization. Overexpression of HCFC1R1 leads to accumulation of HCFC1 in the cytoplasm. HCFC1R1-mediated export may provide the pool of cytoplasmic HCFC1 required for import of virion-derived VP16 into the nucleus. The chain is Host cell factor C1 regulator 1 (HCFC1R1) from Bos taurus (Bovine).